We begin with the raw amino-acid sequence, 709 residues long: Polyribonucleotide nucleotidyltransferase (709 aa).

Positions 485 and 491 each coordinate Mg(2+). Positions 552–611 constitute a KH domain; sequence PRIHTMKIDPKKIKDVIGKGGATIRALTEETGTSIDIDDDGTVKIAATDNNAAKRVMERI. The 69-residue stretch at 621 to 689 folds into the S1 motif domain; sequence NAIYKGKVTR…RQGRIRLTMK (69 aa).

Belongs to the polyribonucleotide nucleotidyltransferase family. As to quaternary structure, component of the RNA degradosome, which is a multiprotein complex involved in RNA processing and mRNA degradation. The cofactor is Mg(2+).

It localises to the cytoplasm. The catalysed reaction is RNA(n+1) + phosphate = RNA(n) + a ribonucleoside 5'-diphosphate. Involved in mRNA degradation. Catalyzes the phosphorolysis of single-stranded polyribonucleotides processively in the 3'- to 5'-direction. The chain is Polyribonucleotide nucleotidyltransferase from Glaesserella parasuis serovar 5 (strain SH0165) (Haemophilus parasuis).